The following is a 2003-amino-acid chain: MVKLANPLYTEWILEAIKKVKKQKQRPSEERICNAVSSSHGLDRRTVLEQLELSVKDGTILKVSNKGLNSYKDPDNPGRIALPKPRNHGKLDTKQSVDWNKLLKRAFEGLAETGGSTLKSIERFLKSQKDVSAACGGSAAPGFHQQLRLAIKRAVGHGRLLKDGPLYRLNTKAASAEGKEGCESLSCLPPVSLLPHEKDKPVAEPIPICSFCLGTKEQNREKQPEELVSCADCGNSGHPSCLKFSPELTVRVKALRWQCIECKTCSSCRDQGKNADNMLFCDSCDRGFHMECCDPPLTRMPKGMWICQICRPRKKGRKLLQKKAAQIKRRYANPIGRPKNRLKKQNTVSKGPFSKVRTGPGRGRKRKITVSSQSASSSEEGYLERIDGLDFCRDSNAPLKFNKKTKGLIDGLTKFFTPSPDGRKARGEVVDYSEQYRIRKKGNRKSSTSDWPTDNQDGWESKQENEERLFGSQEIMTERDMELFRDIQEQALQKVGVTGPPDPQVRCPSVIEFGKYEIHTWYSSPYPQEYSRLPKLYLCEFCLKYMKSRTILQQHMKKCGWFHPPANEIYRKNNISVFEVDGNVSTIYCQNLCLLAKLFLDHKTLYYDVEPFLFYVLTQNDVKGCHLVGYFSKEKHCQQKYNVSCIMILPQYQRKGYGRFLIDFSYLLSKREGQAGSPEKPLSDLGRLSYMAYWKSVILECLYHQNDKQISIKKLSKLTGVCPQDITSTLHHLRMLDFRSDQFVIIRREKLIQDHMAKLQLNLRPVDVDPECLRWTPVIVSNSVVSEDEDEEADEGEKEEPQGQERELETRVKVGKSVSREKKDQESSSLIETDKKPEVKELASSSRLSKQALPRDSLPANSQPPRRGRCGRKNRKTQERFGDKDSKMLVDETLSASQEQYGDCEEKSETSQERFTEMEEQLAAPQVQADGKPDIPKGRFSESVELWRGQLKKSPETLKCRLPEGNDRLPCCYTDGDRAFFRGFSESSEEEEEPESPRSNSPPILTKPTLKRKKPILHRRRRVRKRKHHNSSVVTETISETTEVLDEPFEDSDSERPMPRLEPTFEMEEEEEEEEEESELFPRGYFHCLSSQDILRCQSSSKRPSKEEEEEEEESDDADDTPVLKPVSLLRKCDVNSASLEPDTSTPMKKKKGWPKGKSRKPIHWKKRPGRKPGFKLNQEIIAASAQECIVEPVVPIKPGRKPRTQENEEIVEVKEDLLEERKEEMHTEPDEEAEEEEDTTSSDIRAMSPLDSSNSPEAEPKEPEPEEEDEKPSDDQRQSEEEPQELEEQEQEEEDEVTTEANQNEDHDADDEDEGHLDSLKTKEPEEQPAREDDKEEPGIQGSFLAANMQDSRENTKDKDEAEPDSEEDQPSHEASVVSETMPGSEEDHEEDSNTKEELIELKEEEEIPHSELDLETVQAVQSLTQEESSEHEGAYQDCEETLAACQTLQSYTHTDEDPQMSMVEDCHASEHNSPISSIPSHPSQSVRSVNSPSMPALESGYTQISPEQGSLSAPSMQNMETSPMMDVPSVSDHSQQVVDSGFSDLGSIESTTENYENPSSYDSTMGSSICGNNSSQSSCSYGGLSSSSSLTQNSCVVTQQMANMGNSCSMLQQNTVQPAANCNIKSPQTCVVERPPSNQQPPPPPPPPPPPQQPQPPPQQQAAPQPPPPQPQQQQQQQQQPPPPQQQPQPPPPQQQPPLSQCSMNNSFTAAPMIMEIPESGSTGNISIYERIPGDFGAGSYSQPSATFSLAKLQQLTNTIMDPHAMPYSHSPAVTSYATSVSLSNTGLAQLAPSHPLAGTPQAQATMTPPPNLASTTMNLTSPLLQCNMSATNIGIPHTQRLQGQMPVKGHISIRSKSAPLPSATAHQQQLYGRSPPAVAMQAGPRALAVQRGMNMGVNLMPTPAYNVNSMNMNTLNAMNSYRMTQPMMNSSYHSNPAYMNQTAQYPMQMQMGMMGSQAYTQQPMQPNPHGNMMYTGPSHHSYMNAAGVPKQSLNGPYMRR.

Residues 1–77 (MVKLANPLYT…LNSYKDPDNP (77 aa)) form the SAMD1-like winged helix (WH) domain. Positions 1-144 (MVKLANPLYT…CGGSAAPGFH (144 aa)) are required for activation of RUNX1-1. The required for nuclear localization stretch occupies residues 52-166 (ELSVKDGTIL…HGRLLKDGPL (115 aa)). In terms of domain architecture, H15 spans 95-171 (QSVDWNKLLK…KDGPLYRLNT (77 aa)). Residues 144–663 (HQQLRLAIKR…RKGYGRFLID (520 aa)) form an interaction with PML region. The residue at position 172 (lysine 172) is an N6-acetyllysine. PHD-type zinc fingers lie at residues 206-265 (IPIC…CKTC) and 262-313 (CKTC…CRPR). An interaction with RUNX1-1 region spans residues 312–663 (PRKKGRKLLQ…RKGYGRFLID (352 aa)). Residues 336–377 (GRPKNRLKKQNTVSKGPFSKVRTGPGRGRKRKITVSSQSASS) form a disordered region. An N6-acetyllysine mark is found at lysine 350 and lysine 355. Threonine 369 bears the Phosphothreonine; by PKB/AKT1 mark. Position 419 is a phosphoserine (serine 419). The tract at residues 439-466 (RKKGNRKSSTSDWPTDNQDGWESKQENE) is disordered. Residues 445–458 (KSSTSDWPTDNQDG) are compositionally biased toward polar residues. Position 472 is a phosphoserine (serine 472). The catalytic stretch occupies residues 487 to 777 (IQEQALQKVG…VDPECLRWTP (291 aa)). The MYST-type HAT domain occupies 503 to 777 (PQVRCPSVIE…VDPECLRWTP (275 aa)). The interval 506-809 (RCPSVIEFGK…EPQGQERELE (304 aa)) is mediates interaction with BRPF1, required for histone H3 acetyltransferase activity. The C2HC MYST-type zinc finger occupies 536-561 (LYLCEFCLKYMKSRTILQQHMKKCGW). Lysine 603 carries the post-translational modification N6-acetyllysine; by autocatalysis. Acetyl-CoA-binding positions include 644 to 648 (SCIMI) and 653 to 659 (QRKGYGR). The active-site Proton donor/acceptor is the glutamate 679. Serine 683 lines the acetyl-CoA pocket. Residues 784–939 (VVSEDEDEEA…DGKPDIPKGR (156 aa)) are disordered. A Phosphoserine modification is found at serine 786. Residues 786–798 (SEDEDEEADEGEK) are compositionally biased toward acidic residues. Residues 799 to 841 (EEPQGQERELETRVKVGKSVSREKKDQESSSLIETDKKPEVKE) show a composition bias toward basic and acidic residues. N6-acetyllysine is present on residues lysine 813 and lysine 816. Residue lysine 836 forms a Glycyl lysine isopeptide (Lys-Gly) (interchain with G-Cter in SUMO2) linkage. A compositionally biased stretch (basic residues) spans 866–875 (RRGRCGRKNR). Basic and acidic residues predominate over residues 876–890 (KTQERFGDKDSKMLV). At tyrosine 901 the chain carries Phosphotyrosine. The segment covering 904–917 (CEEKSETSQERFTE) has biased composition (basic and acidic residues). Serine 941 and serine 954 each carry phosphoserine. Residues 983-1083 (GFSESSEEEE…EEEESELFPR (101 aa)) are disordered. At lysine 1007 the chain carries N6-acetyllysine. The segment covering 1009 to 1030 (TLKRKKPILHRRRRVRKRKHHN) has biased composition (basic residues). A compositionally biased stretch (low complexity) spans 1031-1042 (SSVVTETISETT). Acidic residues-rich tracts occupy residues 1043 to 1053 (EVLDEPFEDSD) and 1065 to 1079 (FEMEEEEEEEEEESE). Serine 1090, serine 1091, and serine 1115 each carry phosphoserine. Disordered stretches follow at residues 1096–1174 (RCQS…RKPG), 1197–1438 (IKPG…GAYQ), 1455–1533 (HTDE…PSVS), 1546–1568 (DLGSIESTTENYENPSSYDSTMG), and 1631–1707 (TCVV…CSMN). The segment covering 1107–1120 (EEEEEEEESDDADD) has biased composition (acidic residues). Positions 1136 to 1147 (NSASLEPDTSTP) are enriched in polar residues. Over residues 1148-1174 (MKKKKGWPKGKSRKPIHWKKRPGRKPG) the composition is skewed to basic residues. A compositionally biased stretch (basic and acidic residues) spans 1204–1229 (RTQENEEIVEVKEDLLEERKEEMHTE). Composition is skewed to acidic residues over residues 1230–1241 (PDEEAEEEEDTT) and 1282–1299 (EEPQELEEQEQEEEDEVT). Over residues 1317-1334 (HLDSLKTKEPEEQPARED) the composition is skewed to basic and acidic residues. Lysine 1336 is covalently cross-linked (Glycyl lysine isopeptide (Lys-Gly) (interchain with G-Cter in SUMO2)). Composition is skewed to basic and acidic residues over residues 1352-1361 (DSRENTKDKD) and 1393-1414 (DSNTKEELIELKEEEEIPHSEL). Positions 1473 to 1490 (HNSPISSIPSHPSQSVRS) are enriched in low complexity. Polar residues-rich tracts occupy residues 1502–1523 (GYTQISPEQGSLSAPSMQNMET) and 1550–1568 (IESTTENYENPSSYDSTMG). An interaction with RUNX1-2 region spans residues 1511–1636 (GSLSAPSMQN…KSPQTCVVER (126 aa)). The interval 1511–1740 (GSLSAPSMQN…YERIPGDFGA (230 aa)) is interaction with PML. 2 stretches are compositionally biased toward pro residues: residues 1640–1673 (NQQPPPPPPPPPPPQQPQPPPQQQAAPQPPPPQP) and 1682–1698 (QPPPPQQQPQPPPPQQQ). The segment at 1912-1947 (SMNMNTLNAMNSYRMTQPMMNSSYHSNPAYMNQTAQ) is required for activation of RUNX1-2.

The protein belongs to the MYST (SAS/MOZ) family. In terms of assembly, component of the MOZ/MORF complex composed at least of ING5, KAT6A, KAT6B, MEAF6 and one of BRPF1, BRD1/BRPF2 and BRPF3. Interacts with RUNX2. Interacts with RUNX1; phosphorylation of RUNX1 enhances the interaction. Interacts with p53/TP53. Interacts with PML and this interaction positively regulates its acetylation activity towards p53/TP53. Autoacetylated. Autoacetylation at Lys-603 is required for proper function. Post-translationally, phosphorylation at Thr-369 by PKB/AKT1 inhibits its interaction with PML and negatively regulates its acetylation activity towards p53/TP53.

The protein resides in the nucleus. It is found in the nucleolus. Its subcellular location is the nucleoplasm. It localises to the PML body. It catalyses the reaction L-lysyl-[protein] + acetyl-CoA = N(6)-acetyl-L-lysyl-[protein] + CoA + H(+). Functionally, histone acetyltransferase that acetylates lysine residues in histone H3 and histone H4 (in vitro). Component of the MOZ/MORF complex which has a histone H3 acetyltransferase activity. May act as a transcriptional coactivator for RUNX1 and RUNX2. Acetylates p53/TP53 at 'Lys-120' and 'Lys-382' and controls its transcriptional activity via association with PML. This chain is Histone acetyltransferase KAT6A (Kat6a), found in Mus musculus (Mouse).